Reading from the N-terminus, the 406-residue chain is Acetyltransferase sirH (406 aa).

The next 6 membrane-spanning stretches (helical) occupy residues 9 to 29 (IFIE…FALG), 32 to 52 (AHTF…CQSL), 63 to 83 (LLSN…WILL), 295 to 315 (VQLF…ALLC), 323 to 343 (SALF…HVIA), and 358 to 378 (FIGF…WVGS).

This sequence belongs to the wax synthase family.

Its subcellular location is the membrane. It functions in the pathway mycotoxin biosynthesis. In terms of biological role, acetyltransferase; part of the gene cluster that mediates the biosynthesis of sirodesmin PL, an epipolythiodioxopiperazine (ETP) characterized by a disulfide bridged cyclic dipeptide and that acts as a phytotoxin which is involved in the blackleg didease of canola. SirD catalyzes the O-prenylation of L-tyrosine (L-Tyr) in the presence of dimethylallyl diphosphate (DMAPP) to yield 4-O-dimethylallyl-L-Tyr, and therefore represents probably the first pathway-specific enzyme in the biosynthesis of sirodesmin PL. 4-O-dimethylallyl-L-Tyr, then undergoes condensation with L-Ser in a reaction catalyzed by the non-ribosomal peptide synthase sirP to form the diketopiperazine (DKP) backbone. Further bishydroxylation of the DKP performed by the cytochrome P450 monooxygenase sirC leads to the production of the intermediate phomamide. This step is essential to form the reactive thiol group required for toxicity of sirodesmin PL. The next steps of sirodesmin biosynthesis are not well understood yet, but some predictions could be made from intermediate compounds identification. Phomamide is converted into phomalizarine via oxidation, probably by sirT. Further oxidation, methylation (by sirM or sirN) and reduction steps convert phomalizarine to deacetyl sirodesmin. Finally, acetyltransferase sirH probably acetylates deacetyl sirodesmin to produce sirodesmin PL. The chain is Acetyltransferase sirH from Leptosphaeria maculans (Blackleg fungus).